Here is a 530-residue protein sequence, read N- to C-terminus: 2,3-bisphosphoglycerate-independent phosphoglycerate mutase (530 aa).

Aspartate 15 and serine 65 together coordinate Mn(2+). The active-site Phosphoserine intermediate is serine 65. Substrate contacts are provided by residues histidine 126, arginine 155–aspartate 156, arginine 187, arginine 193, arginine 257–arginine 260, and lysine 330. Positions 397, 401, 438, 439, and 456 each coordinate Mn(2+).

It belongs to the BPG-independent phosphoglycerate mutase family. Monomer. It depends on Mn(2+) as a cofactor.

The enzyme catalyses (2R)-2-phosphoglycerate = (2R)-3-phosphoglycerate. Its pathway is carbohydrate degradation; glycolysis; pyruvate from D-glyceraldehyde 3-phosphate: step 3/5. Functionally, catalyzes the interconversion of 2-phosphoglycerate and 3-phosphoglycerate. This chain is 2,3-bisphosphoglycerate-independent phosphoglycerate mutase, found in Synechococcus sp. (strain JA-3-3Ab) (Cyanobacteria bacterium Yellowstone A-Prime).